The chain runs to 65 residues: Large ribosomal subunit protein bL35 (65 aa).

It belongs to the bacterial ribosomal protein bL35 family.

This is Large ribosomal subunit protein bL35 from Thiobacillus denitrificans (strain ATCC 25259 / T1).